Reading from the N-terminus, the 468-residue chain is 6-phospho-beta-galactosidase (468 aa).

5 residues coordinate D-galactose 6-phosphate: Q19, H116, N159, E160, and N297. E160 (proton donor) is an active-site residue. E375 serves as the catalytic Nucleophile. Positions 428, 429, 435, and 437 each coordinate D-galactose 6-phosphate.

Belongs to the glycosyl hydrolase 1 family.

It catalyses the reaction a 6-phospho-beta-D-galactoside + H2O = D-galactose 6-phosphate + an alcohol. Its pathway is carbohydrate metabolism; lactose degradation; D-galactose 6-phosphate and beta-D-glucose from lactose 6-phosphate: step 1/1. The chain is 6-phospho-beta-galactosidase from Streptococcus pyogenes serotype M28 (strain MGAS6180).